The chain runs to 177 residues: Large ribosomal subunit protein uL6 (177 aa).

The protein belongs to the universal ribosomal protein uL6 family. In terms of assembly, part of the 50S ribosomal subunit.

Its function is as follows. This protein binds to the 23S rRNA, and is important in its secondary structure. It is located near the subunit interface in the base of the L7/L12 stalk, and near the tRNA binding site of the peptidyltransferase center. The protein is Large ribosomal subunit protein uL6 of Polaromonas naphthalenivorans (strain CJ2).